A 162-amino-acid polypeptide reads, in one-letter code: Interleukin-2 (162 aa).

The N-terminal stretch at 1–20 (MYKIQLLSCIALTLALVANG) is a signal peptide. Thr-23 carries O-linked (GalNAc...) threonine glycosylation. An N-linked (GlcNAc...) asparagine glycan is attached at Asn-70. Cysteines 79 and 134 form a disulfide.

The protein belongs to the IL-2 family.

The protein resides in the secreted. Its function is as follows. Cytokine produced by activated CD4-positive helper T-cells and to a lesser extend activated CD8-positive T-cells and natural killer (NK) cells that plays pivotal roles in the immune response and tolerance. Binds to a receptor complex composed of either the high-affinity trimeric IL-2R (IL2RA/CD25, IL2RB/CD122 and IL2RG/CD132) or the low-affinity dimeric IL-2R (IL2RB and IL2RG). Interaction with the receptor leads to oligomerization and conformation changes in the IL-2R subunits resulting in downstream signaling starting with phosphorylation of JAK1 and JAK3. In turn, JAK1 and JAK3 phosphorylate the receptor to form a docking site leading to the phosphorylation of several substrates including STAT5. This process leads to activation of several pathways including STAT, phosphoinositide-3-kinase/PI3K and mitogen-activated protein kinase/MAPK pathways. Functions as a T-cell growth factor and can increase NK-cell cytolytic activity as well. Promotes strong proliferation of activated B-cells and subsequently immunoglobulin production. Plays a pivotal role in regulating the adaptive immune system by controlling the survival and proliferation of regulatory T-cells, which are required for the maintenance of immune tolerance. Moreover, participates in the differentiation and homeostasis of effector T-cell subsets, including Th1, Th2, Th17 as well as memory CD8-positive T-cells. This is Interleukin-2 (IL2) from Cervus elaphus (Red deer).